We begin with the raw amino-acid sequence, 308 residues long: Bacitracin transport ATP-binding protein BcrA (308 aa).

Positions 8–236 constitute an ABC transporter domain; it reads IETENLTKQY…NRKYTEFDVS (229 aa). 40–47 contributes to the ATP binding site; sequence GRNGAGKT.

Belongs to the ABC transporter superfamily. As to quaternary structure, the complex is probably composed of two ATP-binding proteins (BcrA) and two transmembrane proteins (BcrB).

Essential for high-level bacitracin resistance. Part of the ABC transporter complex BcrAB. Probably responsible for energy coupling to the transport system. In Enterococcus faecalis (Streptococcus faecalis), this protein is Bacitracin transport ATP-binding protein BcrA.